Reading from the N-terminus, the 275-residue chain is Large ribosomal subunit protein uL2 (275 aa).

Residues 216-275 (GIRPQTRGSAMNPIDHPHGGGEGKTNSGRHPVTPWGMPTKGYKTRKKKASDKLIISKRKK) form a disordered region. Residues 257–275 (YKTRKKKASDKLIISKRKK) are compositionally biased toward basic residues.

It belongs to the universal ribosomal protein uL2 family. As to quaternary structure, part of the 50S ribosomal subunit. Forms a bridge to the 30S subunit in the 70S ribosome.

Functionally, one of the primary rRNA binding proteins. Required for association of the 30S and 50S subunits to form the 70S ribosome, for tRNA binding and peptide bond formation. It has been suggested to have peptidyltransferase activity; this is somewhat controversial. Makes several contacts with the 16S rRNA in the 70S ribosome. This chain is Large ribosomal subunit protein uL2, found in Aliarcobacter butzleri (strain RM4018) (Arcobacter butzleri).